Here is a 1226-residue protein sequence, read N- to C-terminus: Methionine synthase (1226 aa).

Positions 6-326 (RQQLEQQLKQ…EHIAAIAKAV (321 aa)) constitute a Hcy-binding domain. Zn(2+) contacts are provided by Cys248, Cys311, and Cys312. Residues 357-618 (FVNVGERTNV…VPLKLREAVE (262 aa)) enclose the Pterin-binding domain. Positions 651–745 (SALEWRAWPV…FINAQKSGST (95 aa)) constitute a B12-binding N-terminal domain. Methylcob(III)alamin is bound by residues Glu695, 757-761 (GDVHD), His760, Ser805, Thr809, and Ala861. Residues 747-882 (NGKILLATVK…SDEQRPGFIE (136 aa)) form the B12-binding domain. Residues 898–1226 (KTPKSRPVTL…EKWLAPNLDA (329 aa)) enclose the AdoMet activation domain. S-adenosyl-L-methionine is bound by residues Asp948, Arg1136, and 1191 to 1192 (YF).

It belongs to the vitamin-B12 dependent methionine synthase family. Requires methylcob(III)alamin as cofactor. It depends on Zn(2+) as a cofactor.

It catalyses the reaction (6S)-5-methyl-5,6,7,8-tetrahydrofolate + L-homocysteine = (6S)-5,6,7,8-tetrahydrofolate + L-methionine. It functions in the pathway amino-acid biosynthesis; L-methionine biosynthesis via de novo pathway; L-methionine from L-homocysteine (MetH route): step 1/1. Catalyzes the transfer of a methyl group from methyl-cobalamin to homocysteine, yielding enzyme-bound cob(I)alamin and methionine. Subsequently, remethylates the cofactor using methyltetrahydrofolate. The protein is Methionine synthase (metH) of Vibrio cholerae serotype O1 (strain ATCC 39315 / El Tor Inaba N16961).